We begin with the raw amino-acid sequence, 196 residues long: MNEAVSPGALSTLFTDARTHNGWRETPVSDETLREIYALMKWGPTSANCSPARIVFTRTAEGKERLRPALSSGNLQKTLTAPVTAIVAWDSEFYERLPLLFPHGDARSWFTSSPQLAEETAFRNSSMQAAYLIVACRALGLDTGPMSGFDRQHVDDAFFTGSTLKSNLLINIGYGDSSKLYARLPRLSFEEACGLL.

This sequence belongs to the nitroreductase family. HadB/RutE subfamily. FMN serves as cofactor.

It carries out the reaction 3-hydroxypropanoate + NADP(+) = 3-oxopropanoate + NADPH + H(+). Its function is as follows. May reduce toxic product malonic semialdehyde to 3-hydroxypropionic acid, which is excreted. This chain is Probable malonic semialdehyde reductase RutE, found in Escherichia coli (strain K12 / MC4100 / BW2952).